Reading from the N-terminus, the 154-residue chain is Large ribosomal subunit protein uL15 (154 aa).

The disordered stretch occupies residues 17–44 (KRVGRGIGSGTGKTGGRGVKGQRSRSGV). Gly residues predominate over residues 21 to 35 (RGIGSGTGKTGGRGV).

This sequence belongs to the universal ribosomal protein uL15 family. In terms of assembly, part of the 50S ribosomal subunit.

Functionally, binds to the 23S rRNA. This Bartonella henselae (strain ATCC 49882 / DSM 28221 / CCUG 30454 / Houston 1) (Rochalimaea henselae) protein is Large ribosomal subunit protein uL15.